We begin with the raw amino-acid sequence, 269 residues long: Tryptophan synthase alpha chain (269 aa).

Residues Glu49 and Asp60 each act as proton acceptor in the active site.

The protein belongs to the TrpA family. Tetramer of two alpha and two beta chains.

It catalyses the reaction (1S,2R)-1-C-(indol-3-yl)glycerol 3-phosphate + L-serine = D-glyceraldehyde 3-phosphate + L-tryptophan + H2O. It participates in amino-acid biosynthesis; L-tryptophan biosynthesis; L-tryptophan from chorismate: step 5/5. The alpha subunit is responsible for the aldol cleavage of indoleglycerol phosphate to indole and glyceraldehyde 3-phosphate. This Pseudomonas syringae pv. syringae protein is Tryptophan synthase alpha chain.